The primary structure comprises 533 residues: Thromboxane-A synthase (533 aa).

Topologically, residues 1–10 (MEVLGLLKFE) are cytoplasmic. A helical transmembrane segment spans residues 11–31 (VSGTIVTVTLLVALLALLKWY). Residues 32–75 (SMSAFSRLEKLGIRHPKPSPFVGNLMFFRQGFWESQLELRERYG) lie on the Lumenal side of the membrane. The helical transmembrane segment at 76 to 96 (PLCGYYLGRRMHVVISEPDMI) threads the bilayer. At 97-223 (KQVLVENFSN…RRASTFCIPR (127 aa)) the chain is on the cytoplasmic side. A helical membrane pass occupies residues 224-244 (PLLVLILSFPSIMVPLARILP). The Lumenal portion of the chain corresponds to 245 to 335 (NKNRDELNGF…FTVDEIVGQA (91 aa)). The chain crosses the membrane as a helical span at residues 336 to 356 (FLFLIAGHEVITNTLSFITYL). The Cytoplasmic segment spans residues 357–533 (LATHPDCQER…NGVYIKIVSR (177 aa)). Residue Cys-479 participates in heme binding.

This sequence belongs to the cytochrome P450 family. Monomer. The cofactor is heme. Expressed primarily in lung, kidney, and spleen.

Its subcellular location is the endoplasmic reticulum membrane. It catalyses the reaction prostaglandin H2 = thromboxane A2. The catalysed reaction is prostaglandin H2 = (12S)-hydroxy-(5Z,8E,10E)-heptadecatrienoate + malonaldehyde. It carries out the reaction a hydroperoxyeicosatetraenoate = an oxoeicosatetraenoate + H2O. The enzyme catalyses (15S)-hydroperoxy-(5Z,8Z,11Z,13E)-eicosatetraenoate = 15-oxo-(5Z,8Z,11Z,13E)-eicosatetraenoate + H2O. It catalyses the reaction (15S)-hydroperoxy-(5Z,8Z,11Z,13E)-eicosatetraenoate + AH2 = (15S)-hydroxy-(5Z,8Z,11Z,13E)-eicosatetraenoate + A + H2O. Its function is as follows. Catalyzes the conversion of prostaglandin H2 (PGH2) to thromboxane A2 (TXA2), a potent inducer of blood vessel constriction and platelet aggregation. Also cleaves PGH2 to 12-hydroxy-heptadecatrienoicacid (12-HHT) and malondialdehyde, which is known to act as a mediator of DNA damage. 12-HHT and malondialdehyde are formed stoichiometrically in the same amounts as TXA2. Additionally, displays dehydratase activity, toward (15S)-hydroperoxy-(5Z,8Z,11Z,13E)-eicosatetraenoate (15(S)-HPETE) producing 15-KETE and 15-HETE. This Mus musculus (Mouse) protein is Thromboxane-A synthase (Tbxas1).